Consider the following 213-residue polypeptide: MAKNYYDITLALAGICQSARLVQQLAHQGHCDADALHVSLNSIIDMNPSSTLAVFGGSEANLRVGLETLLGVLNASSRQGLNAELTRYTLSLMVLERKLSSAKGALDTLGNRINGLQRQLEHFDLQSETLMSAMAAIYVDVISPLGPRIQVTGSPAVLQSPQVPAKVRATLLAGIRAAVLWHQVGGGRLQLMFSRNRLTTQAKQILAHLTPEL.

The stretch at 79-126 (QGLNAELTRYTLSLMVLERKLSSAKGALDTLGNRINGLQRQLEHFDLQ) forms a coiled coil.

The protein belongs to the HflD family.

The protein localises to the cytoplasm. Its subcellular location is the cell inner membrane. This Shigella boydii serotype 18 (strain CDC 3083-94 / BS512) protein is High frequency lysogenization protein HflD homolog.